The chain runs to 312 residues: Olfactory receptor 51I2 (312 aa).

Over methionine 1 to serine 25 the chain is Extracellular. An N-linked (GlcNAc...) asparagine glycan is attached at asparagine 5. A helical membrane pass occupies residues tryptophan 26 to leucine 46. Residues glutamine 47 to serine 54 lie on the Cytoplasmic side of the membrane. The chain crosses the membrane as a helical span at residues leucine 55–methionine 75. The Extracellular segment spans residues alanine 76 to isoleucine 99. Cysteine 97 and cysteine 189 form a disulfide bridge. Residues glutamine 100–phenylalanine 120 traverse the membrane as a helical segment. Over aspartate 121–glutamate 139 the chain is Cytoplasmic. The chain crosses the membrane as a helical span at residues valine 140 to proline 160. Topologically, residues phenylalanine 161–serine 196 are extracellular. The helical transmembrane segment at isoleucine 197–serine 217 threads the bilayer. The Cytoplasmic segment spans residues tyrosine 218 to alanine 237. Residues leucine 238–valine 258 form a helical membrane-spanning segment. The Extracellular portion of the chain corresponds to serine 259–histidine 273. The helical transmembrane segment at valine 274–alanine 294 threads the bilayer. Topologically, residues lysine 295 to isoleucine 312 are cytoplasmic.

The protein belongs to the G-protein coupled receptor 1 family.

It is found in the cell membrane. Its function is as follows. Odorant receptor. The chain is Olfactory receptor 51I2 (OR51I2) from Homo sapiens (Human).